A 405-amino-acid polypeptide reads, in one-letter code: S-adenosylmethionine synthase (405 aa).

141 to 146 is a binding site for ATP; it reads GQGSVD.

Belongs to the AdoMet synthase 2 family. Mg(2+) serves as cofactor.

The enzyme catalyses L-methionine + ATP + H2O = S-adenosyl-L-methionine + phosphate + diphosphate. The protein operates within amino-acid biosynthesis; S-adenosyl-L-methionine biosynthesis; S-adenosyl-L-methionine from L-methionine: step 1/1. Functionally, catalyzes the formation of S-adenosylmethionine from methionine and ATP. This chain is S-adenosylmethionine synthase, found in Methanococcus maripaludis (strain C7 / ATCC BAA-1331).